A 426-amino-acid chain; its full sequence is COP9 signalosome complex subunit 6 (426 aa).

Positions 14–155 (VLLHPLVIMQ…AGTTRKLPLF (142 aa)) constitute an MPN domain. The disordered stretch occupies residues 320-426 (PVRFKSQHLG…NESDESSQAS (107 aa)). Residues 334–347 (ADDDDYFDDEDLEN) are compositionally biased toward acidic residues.

The protein belongs to the peptidase M67A family. CSN6 subfamily. In terms of assembly, component of the CSN complex, probably composed of csn-1, csn-2, csn-3, csn-4, csn-5, csn-6 and csn-7. Within the complex it probably interacts directly with csn-2 and csn-4. Interacts with rbx-1.

The protein localises to the cytoplasm. Its subcellular location is the nucleus. Functionally, component of the COP9 signalosome complex (CSN), a complex involved in various cellular and developmental processes. The CSN complex is an essential regulator of the ubiquitin (Ubl) conjugation pathway by mediating the deneddylation of the cullin subunits of the SCF-type E3 ligase complexes, leading to decrease the Ubl ligase activity of SCF. The CSN complex plays an essential role in embryogenesis and oogenesis and is required to regulate microtubule stability in the early embryo. Mediates mei-3/katanin targeting for degradation at the meiosis to mitosis transition via deneddylation of cul-3. The sequence is that of COP9 signalosome complex subunit 6 (csn-6) from Caenorhabditis elegans.